Here is a 581-residue protein sequence, read N- to C-terminus: Phosphoglucomutase, cytoplasmic (581 aa).

Residues M1–T11 show a composition bias toward basic and acidic residues. The tract at residues M1–T20 is disordered. Residues R24 and S123 each contribute to the alpha-D-glucose 1,6-bisphosphate site. S123 (phosphoserine intermediate) is an active-site residue. S123, D298, D300, and D302 together coordinate Mg(2+). Position 123 is a phosphoserine (S123). Alpha-D-glucose 1,6-bisphosphate is bound by residues D302, R303, T366, E385, S387, and K398.

It belongs to the phosphohexose mutase family. Monomer. The cofactor is Mg(2+).

It localises to the cytoplasm. It catalyses the reaction alpha-D-glucose 1-phosphate = alpha-D-glucose 6-phosphate. The catalysed reaction is O-phospho-L-seryl-[protein] + alpha-D-glucose 1-phosphate = alpha-D-glucose 1,6-bisphosphate + L-seryl-[protein]. It carries out the reaction alpha-D-glucose 1,6-bisphosphate + L-seryl-[protein] = O-phospho-L-seryl-[protein] + alpha-D-glucose 6-phosphate. Functionally, catalyzes the reversible isomerization of alpha-D-glucose 1-phosphate to alpha-D-glucose 6-phosphate. The mechanism proceeds via the intermediate compound alpha-D-glucose 1,6-bisphosphate. This enzyme participates in both the breakdown and synthesis of glucose. The protein is Phosphoglucomutase, cytoplasmic (PGM1) of Bromus inermis (Smooth brome grass).